The chain runs to 310 residues: Nucleotide-binding protein BAD_0837 (310 aa).

31–38 (GMSGAGRS) is a binding site for ATP. A GTP-binding site is contributed by 82 to 85 (DVRS).

This sequence belongs to the RapZ-like family.

In terms of biological role, displays ATPase and GTPase activities. The polypeptide is Nucleotide-binding protein BAD_0837 (Bifidobacterium adolescentis (strain ATCC 15703 / DSM 20083 / NCTC 11814 / E194a)).